We begin with the raw amino-acid sequence, 489 residues long: Rhamnulokinase (489 aa).

ATP is bound at residue 13–17 (ASSGR). An intrachain disulfide couples C68 to C222. Substrate-binding positions include G83 and 236–238 (HDT). The active-site Proton acceptor is D237. An ATP-binding site is contributed by T259. A substrate-binding site is contributed by N296. An ATP-binding site is contributed by Q304. Cysteines 353 and 370 form a disulfide. Residue G402 participates in ATP binding. An intrachain disulfide couples C413 to C417.

Belongs to the rhamnulokinase family. In terms of assembly, monomer. It depends on Mg(2+) as a cofactor.

The enzyme catalyses L-rhamnulose + ATP = L-rhamnulose 1-phosphate + ADP + H(+). The protein operates within carbohydrate degradation; L-rhamnose degradation; glycerone phosphate from L-rhamnose: step 2/3. In terms of biological role, involved in the catabolism of L-rhamnose (6-deoxy-L-mannose). Catalyzes the transfer of the gamma-phosphate group from ATP to the 1-hydroxyl group of L-rhamnulose to yield L-rhamnulose 1-phosphate. The chain is Rhamnulokinase from Escherichia coli (strain K12 / DH10B).